The following is a 360-amino-acid chain: Phospho-N-acetylmuramoyl-pentapeptide-transferase (360 aa).

10 consecutive transmembrane segments (helical) span residues 21-41 (YLTL…ILIG), 73-93 (TMGG…WADL), 97-117 (YVLV…VDDY), 134-154 (YFWQ…SATM), 168-188 (VFPQ…VGTS), 199-219 (GLAI…AYVT), 239-259 (LVIV…FNTY), 263-283 (VFMG…LAVL), 288-308 (LVLI…ILQV), and 338-358 (VIVR…ATLK).

The protein belongs to the glycosyltransferase 4 family. MraY subfamily. The cofactor is Mg(2+).

It is found in the cell inner membrane. It carries out the reaction UDP-N-acetyl-alpha-D-muramoyl-L-alanyl-gamma-D-glutamyl-meso-2,6-diaminopimeloyl-D-alanyl-D-alanine + di-trans,octa-cis-undecaprenyl phosphate = di-trans,octa-cis-undecaprenyl diphospho-N-acetyl-alpha-D-muramoyl-L-alanyl-D-glutamyl-meso-2,6-diaminopimeloyl-D-alanyl-D-alanine + UMP. It participates in cell wall biogenesis; peptidoglycan biosynthesis. Functionally, catalyzes the initial step of the lipid cycle reactions in the biosynthesis of the cell wall peptidoglycan: transfers peptidoglycan precursor phospho-MurNAc-pentapeptide from UDP-MurNAc-pentapeptide onto the lipid carrier undecaprenyl phosphate, yielding undecaprenyl-pyrophosphoryl-MurNAc-pentapeptide, known as lipid I. The protein is Phospho-N-acetylmuramoyl-pentapeptide-transferase of Alteromonas mediterranea (strain DSM 17117 / CIP 110805 / LMG 28347 / Deep ecotype).